The chain runs to 819 residues: FYN-binding protein 1 (819 aa).

A compositionally biased stretch (polar residues) spans 1–45 (MAKFNTGSNPTEEAATSSRPFKVAGQSSPSGIQSRKNLFDNQGNA). Residues 1–490 (MAKFNTGSNP…REKKEQELKK (490 aa)) form a disordered region. An N6-acetyllysine modification is found at K3. Phosphoserine occurs at positions 28 and 46. The segment covering 69 to 79 (TYEEKPEKEPK) has biased composition (basic and acidic residues). Over residues 150–160 (GPKPGPAPPVP) the composition is skewed to pro residues. S222 carries the post-translational modification Phosphoserine. Basic and acidic residues-rich tracts occupy residues 237 to 248 (PPKEDPEDKDHG) and 273 to 285 (NFEEKKEDRKTDL). The residue at position 318 (S318) is a Phosphoserine. Composition is skewed to pro residues over residues 342–351 (GPPPPKPNRP) and 380–412 (LPPPPPTHPASQPPLPASHPAHPPVPSLPPRNI). Residues 439-453 (LEEEQESEGETYEDI) are compositionally biased toward acidic residues. Position 445 is a phosphoserine (S445). Residues 448–495 (ETYEDIDSSKERDKKREKEEKKRLELERKEQKEREKKEQELKKKFKLT) adopt a coiled-coil conformation. Over residues 454–489 (DSSKERDKKREKEEKKRLELERKEQKEREKKEQELK) the composition is skewed to basic and acidic residues. The short motif at 479-493 (KEREKKEQELKKKFK) is the Nuclear localization signal element. In terms of domain architecture, SH3 1 spans 499 to 560 (QVIHHAKACC…KTTAVEIDYD (62 aa)). Y559 bears the Phosphotyrosine mark. S561 and S568 each carry phosphoserine. The short motif at 584–587 (YDDV) is the SH2-binding; to LCP2 element. 2 disordered regions span residues 589–635 (EQDA…DEKT) and 649–728 (KDDR…EKEE). Acidic residues predominate over residues 610–626 (TDDEIYDGIEEEDDDDG). Positions 615-618 (YDGI) match the SH2-binding; to FYN motif. The segment covering 649-664 (KDDRKKSIREKPKVSE) has biased composition (basic and acidic residues). A compositionally biased stretch (polar residues) spans 668–677 (NEGSSLPSQH). Residues 682-692 (VGEEVYDDVDA) are compositionally biased toward acidic residues. Position 687 is a phosphotyrosine (Y687). Residues 710-736 (RAKTEEKDPKKLKKQEKEEKDLRKKFK) carry the Nuclear localization signal motif. Basic and acidic residues predominate over residues 711-728 (AKTEEKDPKKLKKQEKEE). One can recognise an SH3 2 domain in the interval 736 to 804 (KYDGEIRVLY…LRSYLVDNDG (69 aa)).

As to quaternary structure, part of a complex consisting of SKAP2, FYB1 and PTPNS1. Part of a complex consisting of SKAP2, FYB1 and PIRB. Part of a complex consisting of SKAP1, FYB1 and CLNK. Interacts with CLNK (via its SH2 domain); this interaction allows SKAP1 and FYB1 to recruit FYN to the complex, thus promoting the phosphorylation of CLNK by FYN. Interacts with FYN. Interacts with LCP2. Interacts with SKAP1. Interacts with SKAP2. Interacts with FASLG. Interacts with EVL. Interacts with TMEM47. Interacts with LCK. T-cell receptor ligation leads to increased tyrosine phosphorylation. Expressed in hematopoietic tissues such as myeloid and T-cells, spleen and thymus. Not expressed in B-cells, nor in non-lymphoid tissues. FYB-130 is preferentially expressed in mature T-cells compared to FYB-120, whereas thymocytes showed a greater relative amount of FYB-120. Expressed in podocytes.

It is found in the cytoplasm. The protein resides in the nucleus. It localises to the cell junction. Acts as an adapter protein of the FYN and LCP2 signaling cascades in T-cells. May play a role in linking T-cell signaling to remodeling of the actin cytoskeleton. Modulates the expression of IL2. Involved in platelet activation. Prevents the degradation of SKAP1 and SKAP2. May be involved in high affinity immunoglobulin epsilon receptor signaling in mast cells. In Mus musculus (Mouse), this protein is FYN-binding protein 1 (Fyb1).